The primary structure comprises 312 residues: Ribosomal protein L11 methyltransferase (312 aa).

4 residues coordinate S-adenosyl-L-methionine: T160, G181, D203, and N246.

Belongs to the methyltransferase superfamily. PrmA family.

The protein resides in the cytoplasm. The catalysed reaction is L-lysyl-[protein] + 3 S-adenosyl-L-methionine = N(6),N(6),N(6)-trimethyl-L-lysyl-[protein] + 3 S-adenosyl-L-homocysteine + 3 H(+). Its function is as follows. Methylates ribosomal protein L11. The protein is Ribosomal protein L11 methyltransferase of Staphylococcus aureus (strain bovine RF122 / ET3-1).